Here is a 382-residue protein sequence, read N- to C-terminus: S-adenosylmethionine synthase (382 aa).

Histidine 16 is an ATP binding site. Position 18 (aspartate 18) interacts with Mg(2+). Residue glutamate 44 coordinates K(+). Residues glutamate 57 and glutamine 100 each contribute to the L-methionine site. A flexible loop region spans residues 100–110 (QSPDIAQGVDN). Residues 165 to 167 (DAK), 231 to 232 (RF), aspartate 240, 246 to 247 (RK), and lysine 267 each bind ATP. Aspartate 240 contacts L-methionine. Position 271 (lysine 271) interacts with L-methionine.

The protein belongs to the AdoMet synthase family. As to quaternary structure, homotetramer; dimer of dimers. It depends on Mg(2+) as a cofactor. K(+) is required as a cofactor.

It is found in the cytoplasm. The catalysed reaction is L-methionine + ATP + H2O = S-adenosyl-L-methionine + phosphate + diphosphate. It functions in the pathway amino-acid biosynthesis; S-adenosyl-L-methionine biosynthesis; S-adenosyl-L-methionine from L-methionine: step 1/1. In terms of biological role, catalyzes the formation of S-adenosylmethionine (AdoMet) from methionine and ATP. The overall synthetic reaction is composed of two sequential steps, AdoMet formation and the subsequent tripolyphosphate hydrolysis which occurs prior to release of AdoMet from the enzyme. This chain is S-adenosylmethionine synthase, found in Legionella pneumophila (strain Paris).